A 91-amino-acid polypeptide reads, in one-letter code: Small ribosomal subunit protein bS18 (91 aa).

It belongs to the bacterial ribosomal protein bS18 family. In terms of assembly, part of the 30S ribosomal subunit. Forms a tight heterodimer with protein bS6.

Functionally, binds as a heterodimer with protein bS6 to the central domain of the 16S rRNA, where it helps stabilize the platform of the 30S subunit. The chain is Small ribosomal subunit protein bS18 from Wolbachia sp. subsp. Brugia malayi (strain TRS).